We begin with the raw amino-acid sequence, 367 residues long: Epoxide hydrolase 3 (367 aa).

The helical transmembrane segment at 21 to 41 (GVFFWVLVYVAALLAAVSYIP) threads the bilayer. Aspartate 173 functions as the Nucleophile in the catalytic mechanism. The Proton donor role is filled by tyrosine 285. Histidine 340 functions as the Proton acceptor in the catalytic mechanism.

It belongs to the AB hydrolase superfamily. Epoxide hydrolase family.

Its subcellular location is the microsome membrane. The catalysed reaction is an epoxide + H2O = an ethanediol. The enzyme catalyses 9,10-epoxyoctadecanoate + H2O = 9,10-dihydroxyoctadecanoate. It catalyses the reaction 9,10-epoxy-(12Z)-octadecenoate + H2O = 9,10-dihydroxy-(12Z)-octadecenoate. It carries out the reaction 8,9-epoxy-(5Z,11Z,14Z)-eicosatrienoate + H2O = 8,9-dihydroxy-(5Z,11Z,14Z)-eicosatrienoate. The catalysed reaction is 11,12-epoxy-(5Z,8Z,14Z)-eicosatrienoate + H2O = 11,12-dihydroxy-(5Z,8Z,14Z)-eicosatrienoate. The enzyme catalyses 14,15-epoxy-(5Z,8Z,11Z)-eicosatrienoate + H2O = 14,15-dihydroxy-(5Z,8Z,11Z)-eicosatrienoate. With respect to regulation, inhibited by 1-(1-acetylpiperidin-4-yl)-3-(4-(trifl uoromethoxy)phenyl)urea (TPAU), 1-cyclohexyl-3-dodecylurea (CDU), 12-(3-adamantan-1-yl-ureido)-dodecanoic acid (AUDA), 1-((3S, 5S, 7S)-adamantan-1-yl)-3-(5-(2-(2-ethoxyethoxy) ethoxy)pentyl)urea (AEPU) and to a lesser extent by 8-(3-((3S, 5S, 7S)-adamantan-1-yl)ureido) octanoic acid (AUOA). Functionally, catalyzes the hydrolysis of epoxide-containing fatty acids. Active in vitro against epoxyeicosatrienoic acids (EETs) including 8,9-EET, 9,10-EET, 11,12-EET and 14,15-EET and leukotoxin. The chain is Epoxide hydrolase 3 (ephx3) from Xenopus tropicalis (Western clawed frog).